A 279-amino-acid chain; its full sequence is DegV domain-containing protein SP_1112 (279 aa).

In terms of domain architecture, DegV spans 4 to 277 (IKIVTDSSVT…ENAWAILIRY (274 aa)). 2 residues coordinate hexadecanoate: Thr62 and Ser94.

May bind long-chain fatty acids, such as palmitate, and may play a role in lipid transport or fatty acid metabolism. The sequence is that of DegV domain-containing protein SP_1112 from Streptococcus pneumoniae serotype 4 (strain ATCC BAA-334 / TIGR4).